A 231-amino-acid chain; its full sequence is Octanoyltransferase (231 aa).

A BPL/LPL catalytic domain is found at 49 to 224 (ADTPDEIWLL…ALQRLLPPVY (176 aa)). Substrate contacts are provided by residues 88–95 (RGGQITYH), 155–157 (ALG), and 168–170 (GLA). Cysteine 186 functions as the Acyl-thioester intermediate in the catalytic mechanism.

The protein belongs to the LipB family.

The protein localises to the cytoplasm. It catalyses the reaction octanoyl-[ACP] + L-lysyl-[protein] = N(6)-octanoyl-L-lysyl-[protein] + holo-[ACP] + H(+). It participates in protein modification; protein lipoylation via endogenous pathway; protein N(6)-(lipoyl)lysine from octanoyl-[acyl-carrier-protein]: step 1/2. Its function is as follows. Catalyzes the transfer of endogenously produced octanoic acid from octanoyl-acyl-carrier-protein onto the lipoyl domains of lipoate-dependent enzymes. Lipoyl-ACP can also act as a substrate although octanoyl-ACP is likely to be the physiological substrate. This is Octanoyltransferase from Aromatoleum aromaticum (strain DSM 19018 / LMG 30748 / EbN1) (Azoarcus sp. (strain EbN1)).